We begin with the raw amino-acid sequence, 116 residues long: Large ribosomal subunit protein bL19 (116 aa).

Belongs to the bacterial ribosomal protein bL19 family.

Its function is as follows. This protein is located at the 30S-50S ribosomal subunit interface and may play a role in the structure and function of the aminoacyl-tRNA binding site. This chain is Large ribosomal subunit protein bL19, found in Haemophilus influenzae (strain 86-028NP).